Here is a 429-residue protein sequence, read N- to C-terminus: Argininosuccinate lyase (429 aa).

Belongs to the lyase 1 family. Argininosuccinate lyase subfamily.

It is found in the cytoplasm. The catalysed reaction is 2-(N(omega)-L-arginino)succinate = fumarate + L-arginine. The protein operates within amino-acid biosynthesis; L-arginine biosynthesis; L-arginine from L-ornithine and carbamoyl phosphate: step 3/3. The protein is Argininosuccinate lyase of Pyrobaculum aerophilum (strain ATCC 51768 / DSM 7523 / JCM 9630 / CIP 104966 / NBRC 100827 / IM2).